The chain runs to 404 residues: Glucose-1-phosphate adenylyltransferase (404 aa).

Alpha-D-glucose 1-phosphate contacts are provided by residues Y99, G164, 179-180 (EK), and S197.

It belongs to the bacterial/plant glucose-1-phosphate adenylyltransferase family. In terms of assembly, homotetramer.

It catalyses the reaction alpha-D-glucose 1-phosphate + ATP + H(+) = ADP-alpha-D-glucose + diphosphate. Its pathway is glycan biosynthesis; glycogen biosynthesis. Involved in the biosynthesis of ADP-glucose, a building block required for the elongation reactions to produce glycogen. Catalyzes the reaction between ATP and alpha-D-glucose 1-phosphate (G1P) to produce pyrophosphate and ADP-Glc. This Nocardia farcinica (strain IFM 10152) protein is Glucose-1-phosphate adenylyltransferase.